The chain runs to 273 residues: Imidazole glycerol phosphate synthase subunit HisF (273 aa).

Active-site residues include Asp11 and Asp134.

This sequence belongs to the HisA/HisF family. As to quaternary structure, heterodimer of HisH and HisF.

Its subcellular location is the cytoplasm. The enzyme catalyses 5-[(5-phospho-1-deoxy-D-ribulos-1-ylimino)methylamino]-1-(5-phospho-beta-D-ribosyl)imidazole-4-carboxamide + L-glutamine = D-erythro-1-(imidazol-4-yl)glycerol 3-phosphate + 5-amino-1-(5-phospho-beta-D-ribosyl)imidazole-4-carboxamide + L-glutamate + H(+). The protein operates within amino-acid biosynthesis; L-histidine biosynthesis; L-histidine from 5-phospho-alpha-D-ribose 1-diphosphate: step 5/9. Its function is as follows. IGPS catalyzes the conversion of PRFAR and glutamine to IGP, AICAR and glutamate. The HisF subunit catalyzes the cyclization activity that produces IGP and AICAR from PRFAR using the ammonia provided by the HisH subunit. The chain is Imidazole glycerol phosphate synthase subunit HisF from Methanococcoides burtonii (strain DSM 6242 / NBRC 107633 / OCM 468 / ACE-M).